An 86-amino-acid polypeptide reads, in one-letter code: Ferredoxin YfhL (86 aa).

2 consecutive 4Fe-4S ferredoxin-type domains span residues 1-29 (MALLITKKCINCDMCEPECPNEAISMGDH) and 31-65 (YEINSDKCTECVGHYETPTCQKVCPIPNTIVKDPA). Positions 9, 12, 15, 19, 38, 41, 50, and 54 each coordinate [4Fe-4S] cluster.

The cofactor is [4Fe-4S] cluster.

Functionally, ferredoxins are iron-sulfur proteins that transfer electrons in a wide variety of metabolic reactions. This Escherichia coli (strain K12) protein is Ferredoxin YfhL (yfhL).